The chain runs to 1560 residues: Tenascin-N (1560 aa).

A signal peptide spans 1-26 (MGLWGMLAFPLGFLLASVLLVASAPA). EGF-like domains lie at 167 to 198 (DQPT…VDCA), 199 to 229 (YAAC…EDCS), and 230 to 260 (EQRC…PDCS). 9 disulfide bridges follow: Cys-171–Cys-181, Cys-175–Cys-186, Cys-188–Cys-197, Cys-202–Cys-212, Cys-206–Cys-217, Cys-219–Cys-228, Cys-233–Cys-243, Cys-237–Cys-248, and Cys-250–Cys-259. Fibronectin type-III domains follow at residues 264 to 353 (APQG…DLAV), 354 to 444 (VGTA…TEID), 445 to 532 (GPTN…TEID), 533 to 622 (SPEN…IDSP), 623 to 706 (KNLV…APTD), 709 to 798 (GPKN…IDSP), 799 to 882 (KNLV…APTD), 885 to 970 (GPKN…APTD), 973 to 1062 (SPKN…IDSP), 1063 to 1144 (KNLV…TKAP), 1149 to 1238 (SPKN…IDPP), and 1239 to 1325 (RNLR…VDAR). 2 disordered regions span residues 868–888 (GTQE…GPKN) and 1044–1063 (GARE…DSPK). Basic and acidic residues predominate over residues 1044–1061 (GARESKKANTEGHTDIDS). The Fibrinogen C-terminal domain maps to 1323 to 1540 (DARFPHPSDC…YVELKIRPFG (218 aa)). Asn-1411 carries N-linked (GlcNAc...) asparagine glycosylation.

The protein belongs to the tenascin family. Homohexamer. Highest expression in kidney followed by spleen and brain. In brain, highest expression is found in hippocampus, cerebellum and olfactory bulb. Expressed in aortic valve, corneal limbus. Expressed in ribs periosteum. During a fracture repair process, expression increases in cells of newly formed perichondrium/peristeum surrounding the cartalaginous callus.

It localises to the secreted. Its subcellular location is the extracellular space. It is found in the extracellular matrix. Its function is as follows. Extracellular matrix protein that seems to be a ligand for ITGA8:ITGB1, ITGAV:ITGB1 and ITGA4:ITGB1. Involved in neurite outgrowth and cell migration in hippocampal explants. During endochondral bone formation, inhibits proliferation and differentiation of proteoblasts mediated by canonical WNT signaling. In tumors, stimulates angiogenesis by elongation, migration and sprouting of endothelial cells. Expressed in most mammary tumors, may facilitate tumorigenesis by supporting the migratory behavior of breast cancer cells. The sequence is that of Tenascin-N from Mus musculus (Mouse).